The primary structure comprises 285 residues: Chalcone synthase 6-4 (285 aa).

C60 is a catalytic residue.

This sequence belongs to the thiolase-like superfamily. Chalcone/stilbene synthases family.

The enzyme catalyses (E)-4-coumaroyl-CoA + 3 malonyl-CoA + 3 H(+) = 2',4,4',6'-tetrahydroxychalcone + 3 CO2 + 4 CoA. It participates in secondary metabolite biosynthesis; flavonoid biosynthesis. Its function is as follows. The primary product of this enzyme is 4,2',4',6'-tetrahydroxychalcone (also termed naringenin-chalcone or chalcone) which can under specific conditions spontaneously isomerize into naringenin. The sequence is that of Chalcone synthase 6-4 (CHS6-4) from Medicago sativa (Alfalfa).